The chain runs to 500 residues: Melanopsin-like (500 aa).

Residues 1–65 (MSHHSSWRGH…TVDVPDHAHY (65 aa)) lie on the Extracellular side of the membrane. N18 is a glycosylation site (N-linked (GlcNAc...) asparagine). Residues 66–86 (IIGSVILIVGITGVIGNALVV) traverse the membrane as a helical segment. Over 87–101 (YVFCRSRTLRTAGNM) the chain is Cytoplasmic. The helical transmembrane segment at 102-122 (FIVNLAVADFLMSVTQSPVFF) threads the bilayer. Residues 123-138 (AASLHRRWVFGERPCE) are Extracellular-facing. C137 and C215 form a disulfide bridge. The helical transmembrane segment at 139–159 (LYAFCGALFGICSMMTLTAIA) threads the bilayer. Residues 160–182 (ADRCLAITQPLALVSRVSRRKAG) are Cytoplasmic-facing. Residues 183-203 (AVLVVVWLYSLGWSLPPFFGW) traverse the membrane as a helical segment. Over 204 to 232 (SAYVPEGLQTSCSWDYMTFTPSVRAYTIL) the chain is Extracellular. A helical membrane pass occupies residues 233-253 (LFVFVFFIPLGIIGSCYFAIF). Residues 254–286 (QTIRAAGKEIRELDCGETHKVYERMQNEWKMAK) lie on the Cytoplasmic side of the membrane. The helical transmembrane segment at 287–307 (VALVVIVLFIISWSPYSVVAL) threads the bilayer. Residues 308–322 (TATAGYSHFLTPYMN) are Extracellular-facing. The helical transmembrane segment at 323–343 (SVPAVIAKASAIHNPIIYAIT) threads the bilayer. K330 carries the post-translational modification N6-(retinylidene)lysine. Topologically, residues 344 to 500 (HPKYRVAIAR…SDGKALLGGN (157 aa)) are cytoplasmic. The tract at residues 404-428 (RWGKTRLSSASDSDSCWTESEADGS) is disordered. A compositionally biased stretch (polar residues) spans 409-428 (RLSSASDSDSCWTESEADGS).

This sequence belongs to the G-protein coupled receptor 1 family. Opsin subfamily. Expressed in a subset of retinal horizontal cells.

It is found in the cell membrane. In terms of biological role, photoreceptor implicated in non-image-forming responses to light. The polypeptide is Melanopsin-like (opn4l) (Danio rerio (Zebrafish)).